Reading from the N-terminus, the 367-residue chain is MASNATFEVEIYGNTTKFENSLRGVNTAMSGLRGEAKNLREALKLDPTNTDKMAQLQKNLQTQLGLSRDKATKLKEELSTVDKGTSAGQKKWLQLTRDLGTAETQANRLEGEIKQVEGAISSGSWDIDAKMDTKGVNSGIDGMKSRFSGLREIAVGVFRQIGSSAISAVGNGLRGWISDAMDTQTAMIALKNTMKFKGNGQDFDYVSKSMQKLARDTNANSEDTLKLSTTFIGLGDSAKTAVGKTEALVKANQAFGGTGENLKGVAQAYGQMSASGKVTAENINQLTDNNTALSASLKDTVMQMNPQLKQYGSFNEAVSNGAVSMDMLDKAMQKAADGSSGATKTIRDTWSGFNEDLSQALLPTLEA.

It belongs to the skunalikevirus tape measure protein family.

The protein localises to the virion. Its function is as follows. Tape measure protein. Serves as a base for tail tube protein polymerization and acts as a template for tail length determination. The sequence is that of Tape measure protein from Lactococcus lactis (Lactococcus lactis bacteriophage F4-1).